The following is a 292-amino-acid chain: Protein/nucleic acid deglycase HchA (292 aa).

Residues 1 to 12 (MSQDVNELSKQP) are compositionally biased toward polar residues. The segment at 1-23 (MSQDVNELSKQPTPDKAEDNAFF) is disordered. Cys190 (nucleophile) is an active-site residue.

It belongs to the peptidase C56 family. HchA subfamily.

The protein resides in the cytoplasm. The catalysed reaction is N(omega)-(1-hydroxy-2-oxopropyl)-L-arginyl-[protein] + H2O = lactate + L-arginyl-[protein] + H(+). The enzyme catalyses N(6)-(1-hydroxy-2-oxopropyl)-L-lysyl-[protein] + H2O = lactate + L-lysyl-[protein] + H(+). It catalyses the reaction S-(1-hydroxy-2-oxopropyl)-L-cysteinyl-[protein] + H2O = lactate + L-cysteinyl-[protein] + H(+). It carries out the reaction N(omega)-(1-hydroxy-2-oxoethyl)-L-arginyl-[protein] + H2O = L-arginyl-[protein] + glycolate + H(+). The catalysed reaction is N(6)-(1-hydroxy-2-oxoethyl)-L-lysyl-[protein] + H2O = glycolate + L-lysyl-[protein] + H(+). The enzyme catalyses S-(1-hydroxy-2-oxoethyl)-L-cysteinyl-[protein] + H2O = glycolate + L-cysteinyl-[protein] + H(+). It catalyses the reaction N(2)-(1-hydroxy-2-oxopropyl)-dGTP + H2O = lactate + dGTP + H(+). It carries out the reaction N(2)-(1-hydroxy-2-oxopropyl)-GTP + H2O = lactate + GTP + H(+). The catalysed reaction is N(2)-(1-hydroxy-2-oxopropyl)-GDP + H2O = lactate + GDP + H(+). The enzyme catalyses N(2)-(1-hydroxy-2-oxopropyl)-GMP + H2O = lactate + GMP + H(+). It catalyses the reaction N(2)-(1-hydroxy-2-oxoethyl)-dGTP + H2O = dGTP + glycolate + H(+). It carries out the reaction N(2)-(1-hydroxy-2-oxoethyl)-GTP + H2O = glycolate + GTP + H(+). The catalysed reaction is N(2)-(1-hydroxy-2-oxoethyl)-GDP + H2O = glycolate + GDP + H(+). The enzyme catalyses N(2)-(1-hydroxy-2-oxoethyl)-GMP + H2O = glycolate + GMP + H(+). It catalyses the reaction an N(2)-(1-hydroxy-2-oxopropyl)-guanosine in RNA + H2O = a guanosine in RNA + lactate + H(+). It carries out the reaction an N(2)-(1-hydroxy-2-oxopropyl)-2'-deoxyguanosine in DNA + H2O = a 2'-deoxyguanosine in DNA + lactate + H(+). The catalysed reaction is an N(2)-(1-hydroxy-2-oxoethyl)-guanosine in RNA + H2O = a guanosine in RNA + glycolate + H(+). The enzyme catalyses an N(2)-(1-hydroxy-2-oxoethyl)-2'-deoxyguanosine in DNA + H2O = a 2'-deoxyguanosine in DNA + glycolate + H(+). Its function is as follows. Protein and nucleotide deglycase that catalyzes the deglycation of the Maillard adducts formed between amino groups of proteins or nucleotides and reactive carbonyl groups of glyoxals. Thus, functions as a protein deglycase that repairs methylglyoxal- and glyoxal-glycated proteins, and releases repaired proteins and lactate or glycolate, respectively. Deglycates cysteine, arginine and lysine residues in proteins, and thus reactivates these proteins by reversing glycation by glyoxals. Acts on early glycation intermediates (hemithioacetals and aminocarbinols), preventing the formation of Schiff bases and advanced glycation endproducts (AGE). Also functions as a nucleotide deglycase able to repair glycated guanine in the free nucleotide pool (GTP, GDP, GMP, dGTP) and in DNA and RNA. Is thus involved in a major nucleotide repair system named guanine glycation repair (GG repair), dedicated to reversing methylglyoxal and glyoxal damage via nucleotide sanitization and direct nucleic acid repair. Plays an important role in protecting cells from carbonyl stress. This Staphylococcus aureus (strain bovine RF122 / ET3-1) protein is Protein/nucleic acid deglycase HchA.